The sequence spans 662 residues: Interleukin-12 receptor subunit beta-1 (662 aa).

A signal peptide spans 1-23 (MEPLVTWVVPLLFLFLLSRQGAA). At 24–545 (CRTSECCFQD…RFSIEVQVSD (522 aa)) the chain is on the extracellular side. 5 consecutive Fibronectin type-III domains span residues 46–136 (GPRD…LYNS), 142–234 (PLGD…VPPE), 237–337 (PQPQ…IPAD), 338–444 (THTE…GNAS), and 448–542 (TPHH…IEVQ). Cys52 and Cys62 form a disulfide bridge. Asn121 is a glycosylation site (N-linked (GlcNAc...) asparagine). The WSXWS motif motif lies at 222–226 (WSKWS). Asn329, Asn346, Asn352, Asn442, and Asn456 each carry an N-linked (GlcNAc...) asparagine glycan. The helical transmembrane segment at 546 to 570 (WLIFFASLGSFLSILLVGVLGYLGL) threads the bilayer. Topologically, residues 571 to 662 (NRAARHLCPP…EDGDRCKAKM (92 aa)) are cytoplasmic. The short motif at 577–585 (LCPPLPTPC) is the Box 1 motif element. Basic and acidic residues predominate over residues 626 to 637 (GERTEPLEKTEL). Residues 626–648 (GERTEPLEKTELPEGAPELALDT) form a disordered region.

This sequence belongs to the type I cytokine receptor family. Type 2 subfamily. As to quaternary structure, dimer or oligomer; disulfide-linked. Interacts with IL12RB2 to form the high affinity IL12 receptor. Heterodimer with IL23R; in presence of IL23. The heterodimer forms the IL23 receptor.

Its subcellular location is the membrane. Its function is as follows. Functions as an interleukin receptor which binds interleukin-12 with low affinity and is involved in IL12 transduction. Associated with IL12RB2 it forms a functional, high affinity receptor for IL12. Also associates with IL23R to form the interleukin-23 receptor which functions in IL23 signal transduction probably through activation of the Jak-Stat signaling cascade. This is Interleukin-12 receptor subunit beta-1 (IL12RB1) from Homo sapiens (Human).